The primary structure comprises 344 residues: MITQRQNDILNLIVELFTQTHEPVGSKALQRTIESSSATIRNDMAKLEKLGLLEKAHTSSGRMPSPAGFKYFVEHSLRLDSIDEQDIYHVIKAFDFEAFKLEDMLQKASHILSEMTGYTSVILDVEPARQRLTGFDVVQLSNHDALAVMTLDESKPVTVQFAIPRNFLTRDLIAFKAIVEERLLDGSVMDIHYKLRTEIPQIVQKYFVTTDNVLQLFDYVFSELFLETVFVAGKVNSLTYSDLSTYQFLDNEQQVAISLRQGLKEGEMASVQVADSQEAALADVSVLTHKFLIPYRGFGLLSLIGPIDMDYRRSVSLVNIIGKVLAAKLGDYYRYLNSNHYEVH.

This sequence belongs to the HrcA family.

Its function is as follows. Negative regulator of class I heat shock genes (grpE-dnaK-dnaJ and groELS operons). Prevents heat-shock induction of these operons. This Streptococcus agalactiae serotype III (strain NEM316) protein is Heat-inducible transcription repressor HrcA.